The following is a 161-amino-acid chain: Putative TRAP transporter small permease protein HI_1030 (161 aa).

A run of 4 helical transmembrane segments spans residues 13–33 (LEIL…LNVV), 51–71 (YLFI…NQHV), 86–106 (AILK…IIEG), and 135–155 (IAGI…IFFI).

This sequence belongs to the TRAP transporter small permease family.

It localises to the cell inner membrane. This is Putative TRAP transporter small permease protein HI_1030 from Haemophilus influenzae (strain ATCC 51907 / DSM 11121 / KW20 / Rd).